The primary structure comprises 299 residues: Homoserine kinase (299 aa).

84–94 (PISRGLGSSSA) is a binding site for ATP.

The protein belongs to the GHMP kinase family. Homoserine kinase subfamily.

Its subcellular location is the cytoplasm. The catalysed reaction is L-homoserine + ATP = O-phospho-L-homoserine + ADP + H(+). Its pathway is amino-acid biosynthesis; L-threonine biosynthesis; L-threonine from L-aspartate: step 4/5. Functionally, catalyzes the ATP-dependent phosphorylation of L-homoserine to L-homoserine phosphate. The polypeptide is Homoserine kinase (Helicobacter hepaticus (strain ATCC 51449 / 3B1)).